Here is a 206-residue protein sequence, read N- to C-terminus: Small ribosomal subunit protein uS4 (206 aa).

Positions 96-158 (GRLDNVVYRM…AKQQSRIKAA (63 aa)) constitute an S4 RNA-binding domain.

Belongs to the universal ribosomal protein uS4 family. Part of the 30S ribosomal subunit. Contacts protein S5. The interaction surface between S4 and S5 is involved in control of translational fidelity.

One of the primary rRNA binding proteins, it binds directly to 16S rRNA where it nucleates assembly of the body of the 30S subunit. In terms of biological role, with S5 and S12 plays an important role in translational accuracy. The chain is Small ribosomal subunit protein uS4 from Vibrio atlanticus (strain LGP32) (Vibrio splendidus (strain Mel32)).